We begin with the raw amino-acid sequence, 74 residues long: Translation initiation factor IF-1 (74 aa).

An S1-like domain is found at 1–72 (MGKEDVIRME…TRGRIVYRKK (72 aa)).

This sequence belongs to the IF-1 family. As to quaternary structure, component of the 30S ribosomal translation pre-initiation complex which assembles on the 30S ribosome in the order IF-2 and IF-3, IF-1 and N-formylmethionyl-tRNA(fMet); mRNA recruitment can occur at any time during PIC assembly.

The protein resides in the cytoplasm. Its function is as follows. One of the essential components for the initiation of protein synthesis. Stabilizes the binding of IF-2 and IF-3 on the 30S subunit to which N-formylmethionyl-tRNA(fMet) subsequently binds. Helps modulate mRNA selection, yielding the 30S pre-initiation complex (PIC). Upon addition of the 50S ribosomal subunit IF-1, IF-2 and IF-3 are released leaving the mature 70S translation initiation complex. The protein is Translation initiation factor IF-1 of Thermotoga petrophila (strain ATCC BAA-488 / DSM 13995 / JCM 10881 / RKU-1).